Consider the following 346-residue polypeptide: NSSLPTNISGGTPAVSAGYLFLDIITYLVFAVTFVLGVLGNGLVIWVAGFRMRHTVTTISYLNLAVADFCFTSTLPFLMVVKVMRGHWPFGWFLCKFIFTIVDINLFGSVFLIALIALDRCVCVLHPVWTQNHRTVSLAKKVIIGPWVMALLLTLPVIIRVTTVPGKTGTVACTFDFSPWTNDPVEKLKVTIAMLTVRGIIRFIIGFSVPMSIVAVSYGLIATKIHKQGLIKSSRPLRVLSFVVAAFFLCWSPYQVVAFIATVRLRNILQGLSKELRIAVDATSALAFFNSCLNPMLYVFMGQDFRERLIHSLPTSLERALTEDSAQTSDTATNSTLPSAEVPLQA.

Residues N1 and N7 are each glycosylated (N-linked (GlcNAc...) asparagine). Residues N1–I24 lie on the Extracellular side of the membrane. The chain crosses the membrane as a helical span at residues I25–V47. Topologically, residues A48–T58 are cytoplasmic. A helical transmembrane segment spans residues I59 to V80. The Extracellular portion of the chain corresponds to V81–F97. C95 and C173 form a disulfide bridge. The chain crosses the membrane as a helical span at residues I98 to L118. The Cytoplasmic segment spans residues D119–S137. A helical transmembrane segment spans residues L138 to I159. The Extracellular portion of the chain corresponds to R160 to R202. The helical transmembrane segment at F203–T223 threads the bilayer. Topologically, residues K224 to V239 are cytoplasmic. The chain crosses the membrane as a helical span at residues L240 to V263. Topologically, residues R264–A282 are extracellular. The chain crosses the membrane as a helical span at residues T283–G302. The Cytoplasmic segment spans residues Q303–A346. The segment at L321–A346 is disordered. Residues D324–P338 are compositionally biased toward polar residues.

Belongs to the G-protein coupled receptor 1 family. In terms of processing, phosphorylated; which is necessary for desensitization.

It is found in the cell membrane. Its function is as follows. High affinity receptor for N-formyl-methionyl peptides (fMLP), which are powerful neutrophil chemotactic factors. Binding of fMLP to the receptor stimulates intracellular calcium mobilization and superoxide anion release. This response is mediated via a G-protein that activates a phosphatidylinositol-calcium second messenger system. Receptor for TAFA4, mediates its effects on chemoattracting macrophages, promoting phagocytosis and increasing ROS release. Receptor for cathepsin CTSG, leading to increased phagocyte chemotaxis. This Macaca mulatta (Rhesus macaque) protein is fMet-Leu-Phe receptor (FPR1).